Here is a 200-residue protein sequence, read N- to C-terminus: MPIGTPSVPYRLPGSQMERWVDIYTRLGVERILFLGSEVNDGIANSLVAQMLYLDSEDSSKPIYLYINSPGGSVTAGLAIYDTIQYVKSEVVTICVGLAASMGAFLLAAGTKGKRVALPHSRIMIHQPLGGTSRRQASDIEIEAREILRMKEMLNRSLSDMSGQSFEKIEKDTDRDYFLSAEEAKEYGLIDRVISHPNEA.

Ser-101 acts as the Nucleophile in catalysis. His-126 is a catalytic residue.

This sequence belongs to the peptidase S14 family. Fourteen ClpP subunits assemble into 2 heptameric rings which stack back to back to give a disk-like structure with a central cavity, resembling the structure of eukaryotic proteasomes.

It localises to the cytoplasm. It catalyses the reaction Hydrolysis of proteins to small peptides in the presence of ATP and magnesium. alpha-casein is the usual test substrate. In the absence of ATP, only oligopeptides shorter than five residues are hydrolyzed (such as succinyl-Leu-Tyr-|-NHMec, and Leu-Tyr-Leu-|-Tyr-Trp, in which cleavage of the -Tyr-|-Leu- and -Tyr-|-Trp bonds also occurs).. Cleaves peptides in various proteins in a process that requires ATP hydrolysis. Has a chymotrypsin-like activity. Plays a major role in the degradation of misfolded proteins. The polypeptide is ATP-dependent Clp protease proteolytic subunit 3 (Synechococcus sp. (strain CC9605)).